Consider the following 132-residue polypeptide: Small ribosomal subunit protein uS8 (132 aa).

The protein belongs to the universal ribosomal protein uS8 family. Part of the 30S ribosomal subunit. Contacts proteins S5 and S12.

Its function is as follows. One of the primary rRNA binding proteins, it binds directly to 16S rRNA central domain where it helps coordinate assembly of the platform of the 30S subunit. The polypeptide is Small ribosomal subunit protein uS8 (Streptococcus agalactiae serotype V (strain ATCC BAA-611 / 2603 V/R)).